We begin with the raw amino-acid sequence, 188 residues long: Putative manganese efflux pump MntP (188 aa).

6 helical membrane-spanning segments follow: residues 3-23 (ISAT…ASIG), 41-61 (LIFG…GMLA), 62-82 (SQFI…FLGG), 106-128 (WILV…GLAF), 143-163 (ATLI…PLLG), and 168-188 (ILGG…HFAG).

Belongs to the MntP (TC 9.B.29) family.

It localises to the cell inner membrane. Functionally, probably functions as a manganese efflux pump. This Enterobacter sp. (strain 638) protein is Putative manganese efflux pump MntP.